Consider the following 1431-residue polypeptide: Zinc finger protein 687b (1431 aa).

2 disordered regions span residues 24–481 (KEAI…RPLK) and 504–538 (KGGAAANAGKDANKGQTGGRAGPVKGGKKNDTTAG). Residues 61-73 (SPSPSTDSQSDPS) show a composition bias toward low complexity. Residues 103–122 (GFVSSGGSVHMSQSRGQPNG) show a composition bias toward polar residues. Composition is skewed to low complexity over residues 174–188 (MQLLQQQHMQQEMNL), 196–209 (APANPSGASGAASP), and 217–248 (LLSTPSTASSSSPSSSSPSVGSRVSGAVASSP). Residues 249 to 267 (LATSLTEPFNGTPRLSSSA) are compositionally biased toward polar residues. A compositionally biased stretch (low complexity) spans 311–324 (SQSPSIPPSTSISP). The segment covering 342-359 (RAQQNWLSTAAQTGNGKS) has biased composition (polar residues). The span at 361-377 (PQEERNPEHVIEERDSP) shows a compositional bias: basic and acidic residues. The segment covering 385 to 410 (PKSSMPTSAVTKRSCSPAAASSPSAA) has biased composition (low complexity). Positions 438 to 449 (DGGKGDTDKIEV) are enriched in basic and acidic residues. Positions 519–528 (QTGGRAGPVK) are enriched in gly residues. A C2H2-type 1; degenerate zinc finger spans residues 674-692 (YRCLECGDSFALERSLARH). Residues 754–816 (TTPIGMLSPS…GPQSPQALMP (63 aa)) form a disordered region. The segment covering 760-775 (LSPSLSSPPLTSSTTP) has biased composition (low complexity). The span at 781 to 802 (APSTSSPLKDSPSPGTASTQPS) shows a compositional bias: polar residues. The C2H2-type 2; degenerate zinc-finger motif lies at 830–853 (FKCPECQAQFLSKAELVTHFQQIR). 4 consecutive C2H2-type zinc fingers follow at residues 919 to 942 (YRCSSCQVVFGGLNSIKSHIQTAH), 947 to 970 (HKCPNCPMAFKSAQSAQGHITSQH), 982 to 1004 (YKCVMCDTVFTQKPLLYMHFDTH), and 1013 to 1036 (FKCPDCTKLYAQKGSMMEHIKTAH). The tract at residues 1041-1120 (VKAETPPTTS…QVSSPESGNM (80 aa)) is disordered. Over residues 1043 to 1057 (AETPPTTSSPVSAPA) the composition is skewed to low complexity. Polar residues predominate over residues 1058–1075 (GNSTSKPKPATENNSDEL). A compositionally biased stretch (acidic residues) spans 1080–1111 (GEEEEEGEDEEGEQEGEEREDEEEEENEEEEQ). Residues 1122-1145 (WRCKECKKRFPEREDYIDHMKNEH) form a C2H2-type 7 zinc finger. Residues 1205-1227 (WHCSEGKRTFSSRLILEKHIRVR) form a C2H2-type 8; degenerate zinc finger. Residues 1225-1310 (RVRHGIRSRQ…EEEDGTFRCT (86 aa)) are disordered. 2 consecutive C2H2-type zinc fingers follow at residues 1307–1329 (FRCTPCGFTTQDWEEFQRHIPVH) and 1337–1360 (QQCLQCGACFASAGSLSRHKFITH). Residues 1362-1392 (LRQGQHDRNASPGASPQYGSPSSPKAGEDGD) form a disordered region. Polar residues predominate over residues 1373–1384 (PGASPQYGSPSS). The segment at 1395–1425 (VSCRVCGRRFDKASDLNTHFRTHGMAFITAH) adopts a C2H2-type 11 zinc-finger fold.

Belongs to the krueppel C2H2-type zinc-finger protein family. As to expression, widely expressed with highest levels in eye, spleen and ovary.

The protein localises to the nucleus. In terms of biological role, may be involved in transcriptional regulation. In Danio rerio (Zebrafish), this protein is Zinc finger protein 687b (znf687b).